The following is a 920-amino-acid chain: Glutamate receptor 2.2 (920 aa).

Residues M1 to G24 form the signal peptide. Topologically, residues Q25–S580 are extracellular. N-linked (GlcNAc...) asparagine glycosylation is found at N53, N204, N267, N331, N342, N477, and N542. Residues I581–L601 form a helical membrane-spanning segment. Residues E602–R610 are Cytoplasmic-facing. The chain crosses the membrane as a helical span at residues G611 to A631. At P632 to R635 the chain is on the cytoplasmic side. A helical transmembrane segment spans residues V636–T656. Over Q657 to S830 the chain is Extracellular. A glycan (N-linked (GlcNAc...) asparagine) is linked at N702. Residues F831–F851 form a helical membrane-spanning segment. Over C852–L920 the chain is Cytoplasmic.

The protein belongs to the glutamate-gated ion channel (TC 1.A.10.1) family. In terms of assembly, may form heteromers. In terms of tissue distribution, expressed predominantly in roots.

Its subcellular location is the membrane. Functionally, glutamate-gated receptor that probably acts as a non-selective cation channel. May be involved in light-signal transduction and calcium homeostasis via the regulation of calcium influx into cells. In Arabidopsis thaliana (Mouse-ear cress), this protein is Glutamate receptor 2.2 (GLR2.2).